The chain runs to 282 residues: Probable endonuclease 4 (282 aa).

Residues His69, His109, Glu145, Asp179, His182, His216, Asp229, His231, and Glu261 each contribute to the Zn(2+) site.

This sequence belongs to the AP endonuclease 2 family. Requires Zn(2+) as cofactor.

It carries out the reaction Endonucleolytic cleavage to 5'-phosphooligonucleotide end-products.. In terms of biological role, endonuclease IV plays a role in DNA repair. It cleaves phosphodiester bonds at apurinic or apyrimidinic (AP) sites, generating a 3'-hydroxyl group and a 5'-terminal sugar phosphate. This chain is Probable endonuclease 4, found in Edwardsiella ictaluri (strain 93-146).